The primary structure comprises 1161 residues: PAN2-PAN3 deadenylation complex catalytic subunit pan2 (1161 aa).

WD repeat units lie at residues 20 to 59 (GLPT…RYTS) and 276 to 315 (ANVS…HFNE). Residues 316-452 (MSKEVEFADV…GAKLNGEAED (137 aa)) form a linker region. The 370-residue stretch at 453 to 822 (DPLLKYSNVE…SPCILAYQAK (370 aa)) folds into the USP domain. The region spanning 871–1049 (VALDTEFVDL…IEDARMALRL (179 aa)) is the Exonuclease domain. 4 residues coordinate a divalent metal cation: D874, E876, D983, and D1042. One copy of the WD 4 repeat lies at 1009 to 1060 (NRRLSLRYLAWAVFKEYIQEEPADNNQGHDSIEDARMALRLWKKFQEYEDAG). A disordered region spans residues 1092–1161 (RPGTAVTMQN…GDFFGGSPLK (70 aa)). Over residues 1097-1110 (VTMQNSSGRNTPST) the composition is skewed to polar residues. A compositionally biased stretch (low complexity) spans 1116 to 1129 (AATATATTSAPATP). Gly residues predominate over residues 1145-1155 (TFGGPGAGDFF).

It belongs to the peptidase C19 family. PAN2 subfamily. In terms of assembly, forms a heterotrimer with an asymmetric homodimer of the regulatory subunit pan3 to form the poly(A)-nuclease (PAN) deadenylation complex. Requires a divalent metal cation as cofactor.

Its subcellular location is the cytoplasm. The enzyme catalyses Exonucleolytic cleavage of poly(A) to 5'-AMP.. Positively regulated by the regulatory subunit pan3. Functionally, catalytic subunit of the poly(A)-nuclease (PAN) deadenylation complex, one of two cytoplasmic mRNA deadenylases involved in mRNA turnover. PAN specifically shortens poly(A) tails of RNA and the activity is stimulated by poly(A)-binding protein pab1. PAN deadenylation is followed by rapid degradation of the shortened mRNA tails by the CCR4-NOT complex. Deadenylated mRNAs are then degraded by two alternative mechanisms, namely exosome-mediated 3'-5' exonucleolytic degradation, or deadenylation-dependent mRNA decaping and subsequent 5'-3' exonucleolytic degradation by xrn1. May also be involved in post-transcriptional maturation of mRNA poly(A) tails. This is PAN2-PAN3 deadenylation complex catalytic subunit pan2 from Neosartorya fischeri (strain ATCC 1020 / DSM 3700 / CBS 544.65 / FGSC A1164 / JCM 1740 / NRRL 181 / WB 181) (Aspergillus fischerianus).